The primary structure comprises 399 residues: Rhodopsin, G0-coupled (399 aa).

At 1 to 17 the chain is on the extracellular side; sequence MPFPLNRTDTALVISPS. Asn-6 carries an N-linked (GlcNAc...) asparagine glycan. A helical membrane pass occupies residues 18–43; sequence EFRIIGIFISICCIIGVLGNLLIIIV. Residues 44 to 55 are Cytoplasmic-facing; it reads FAKRRSVRRPIN. Residues 56 to 81 form a helical membrane-spanning segment; that stretch reads FFVLNLAVSDLIVALLGYPMTAASAF. Over 82–95 the chain is Extracellular; that stretch reads SNRWIFDNIGCKIY. Cys-92 and Cys-169 are joined by a disulfide. A helical transmembrane segment spans residues 96-115; that stretch reads AFLCFNSGVISIMTHAALSF. Topologically, residues 116-134 are cytoplasmic; that stretch reads CRYIIICQYGYRKKITQTT. Residues 135-158 traverse the membrane as a helical segment; it reads VLRTLFSIWSFAMFWTLSPLFGWS. Topologically, residues 159–182 are extracellular; the sequence is SYVIEVVPVSCSVNWYGHGLGDVS. The helical transmembrane segment at 183 to 210 threads the bilayer; it reads YTISVIVAVYVFPLSIIVFSYGMILQEK. At 211–240 the chain is on the cytoplasmic side; it reads VCKDSRKNGIRAQQRYTPRFIQDIEQRVTF. Residues 241 to 263 traverse the membrane as a helical segment; it reads ISFLMMAAFMVAWTPYAIMSALA. Over 264 to 271 the chain is Extracellular; sequence IGSFNVEN. The chain crosses the membrane as a helical span at residues 272–295; the sequence is SFAALPTLFAKASCAYNPFIYAFT. Lys-282 bears the N6-(retinylidene)lysine mark. Residues 296–399 are Cytoplasmic-facing; sequence NANFRDTVVE…NTFTADFSVI (104 aa).

This sequence belongs to the G-protein coupled receptor 1 family. Opsin subfamily. In terms of processing, phosphorylated on some or all of the serine and threonine residues present in the C-terminal region. Retina. Expressed in the hyperpolarizing cell layer of the photoreceptor cells with its photoreceptive region adjacent to the lens.

The protein localises to the membrane. Functionally, visual pigments are the light-absorbing molecules that mediate vision. They consist of an apoprotein, opsin, covalently linked to cis-retinal. The sequence is that of Rhodopsin, G0-coupled (SCOP2) from Mizuhopecten yessoensis (Japanese scallop).